A 463-amino-acid polypeptide reads, in one-letter code: Quinolone resistance protein NorB (463 aa).

14 consecutive transmembrane segments (helical) span residues 17–37 (IGIV…VNVV), 53–73 (IAVS…GGLA), 86–106 (IILN…LLLI), 107–127 (IGRL…LSII), 142–162 (YWSI…GAVA), 165–185 (LGWR…LFLI), 201–221 (FDIK…ILIT), 230–250 (SLLF…FIVL), 273–293 (TASN…NTFV), 299–319 (YSSL…LIMI), 334–354 (PMLI…LTFL), 357–377 (ILYV…LGIY), 403–423 (MASA…YAIV), and 435–455 (IALW…LLLV).

Belongs to the major facilitator superfamily. TCR/Tet family.

It is found in the cell membrane. In terms of biological role, multidrug efflux pump that acts independently of NorA and is one of the factors that confers resistance against diverse quinolones and chemical compounds. The protein is Quinolone resistance protein NorB (norB) of Staphylococcus aureus (strain MRSA252).